The primary structure comprises 89 residues: Small ribosomal subunit protein bS20 (89 aa).

It belongs to the bacterial ribosomal protein bS20 family.

Functionally, binds directly to 16S ribosomal RNA. The protein is Small ribosomal subunit protein bS20 of Wolbachia pipientis wMel.